Consider the following 414-residue polypeptide: Esterase FrsA (414 aa).

The protein belongs to the FrsA family.

It catalyses the reaction a carboxylic ester + H2O = an alcohol + a carboxylate + H(+). Functionally, catalyzes the hydrolysis of esters. This is Esterase FrsA from Shigella flexneri serotype 5b (strain 8401).